Consider the following 397-residue polypeptide: uncharacterized protein (397 aa).

12 helical membrane passes run 10-30 (FIIF…YAVM), 48-68 (GLLV…VTII), 76-96 (PVLL…ALAP), 106-126 (ILSA…ASEM), 141-161 (GGLT…GDVL), 165-185 (AVFS…MAAV), 209-229 (LFSF…YTFI), 242-262 (VGIT…NFFA), 274-294 (MIGV…IAIY), 296-316 (AAAI…PPLL), 334-354 (VSVS…GMIL), and 363-383 (LFAG…FAHL).

The protein belongs to the major facilitator superfamily.

The protein localises to the cell membrane. This is an uncharacterized protein from Bacillus subtilis (strain 168).